A 167-amino-acid polypeptide reads, in one-letter code: Cell number regulator 3 (167 aa).

The chain crosses the membrane as a helical span at residues 67 to 84 (GMTSCGTSAALFALIQWL).

The protein belongs to the cornifelin family. Expressed only in pollen.

The protein resides in the membrane. The protein is Cell number regulator 3 (CNR3) of Zea mays (Maize).